A 101-amino-acid chain; its full sequence is Nucleoid-associated protein Cla_0113 (101 aa).

Belongs to the YbaB/EbfC family. As to quaternary structure, homodimer.

The protein resides in the cytoplasm. Its subcellular location is the nucleoid. Binds to DNA and alters its conformation. May be involved in regulation of gene expression, nucleoid organization and DNA protection. This is Nucleoid-associated protein Cla_0113 from Campylobacter lari (strain RM2100 / D67 / ATCC BAA-1060).